The following is a 556-amino-acid chain: 2-succinyl-5-enolpyruvyl-6-hydroxy-3-cyclohexene-1-carboxylate synthase (556 aa).

This sequence belongs to the TPP enzyme family. MenD subfamily. Homodimer. Requires Mg(2+) as cofactor. Mn(2+) is required as a cofactor. It depends on thiamine diphosphate as a cofactor.

It carries out the reaction isochorismate + 2-oxoglutarate + H(+) = 5-enolpyruvoyl-6-hydroxy-2-succinyl-cyclohex-3-ene-1-carboxylate + CO2. It participates in quinol/quinone metabolism; 1,4-dihydroxy-2-naphthoate biosynthesis; 1,4-dihydroxy-2-naphthoate from chorismate: step 2/7. The protein operates within quinol/quinone metabolism; menaquinone biosynthesis. Functionally, catalyzes the thiamine diphosphate-dependent decarboxylation of 2-oxoglutarate and the subsequent addition of the resulting succinic semialdehyde-thiamine pyrophosphate anion to isochorismate to yield 2-succinyl-5-enolpyruvyl-6-hydroxy-3-cyclohexene-1-carboxylate (SEPHCHC). This Salmonella choleraesuis (strain SC-B67) protein is 2-succinyl-5-enolpyruvyl-6-hydroxy-3-cyclohexene-1-carboxylate synthase.